The following is a 101-amino-acid chain: Urease subunit beta (101 aa).

Belongs to the urease beta subunit family. As to quaternary structure, heterotrimer of UreA (gamma), UreB (beta) and UreC (alpha) subunits. Three heterotrimers associate to form the active enzyme.

Its subcellular location is the cytoplasm. The enzyme catalyses urea + 2 H2O + H(+) = hydrogencarbonate + 2 NH4(+). The protein operates within nitrogen metabolism; urea degradation; CO(2) and NH(3) from urea (urease route): step 1/1. The protein is Urease subunit beta of Burkholderia multivorans (strain ATCC 17616 / 249).